Consider the following 291-residue polypeptide: Acetyl-coenzyme A carboxylase carboxyl transferase subunit beta (291 aa).

Positions 29-291 constitute a CoA carboxyltransferase N-terminal domain; that stretch reads IMTKCPQCKK…TGGEREWLEN (263 aa). 4 residues coordinate Zn(2+): Cys-33, Cys-36, Cys-52, and Cys-55. Residues 33–55 form a C4-type zinc finger; sequence CPQCKKIMLTKELDKNLRVCMNC.

It belongs to the AccD/PCCB family. Acetyl-CoA carboxylase is a heterohexamer composed of biotin carboxyl carrier protein (AccB), biotin carboxylase (AccC) and two subunits each of ACCase subunit alpha (AccA) and ACCase subunit beta (AccD). Zn(2+) is required as a cofactor.

Its subcellular location is the cytoplasm. It catalyses the reaction N(6)-carboxybiotinyl-L-lysyl-[protein] + acetyl-CoA = N(6)-biotinyl-L-lysyl-[protein] + malonyl-CoA. It functions in the pathway lipid metabolism; malonyl-CoA biosynthesis; malonyl-CoA from acetyl-CoA: step 1/1. In terms of biological role, component of the acetyl coenzyme A carboxylase (ACC) complex. Biotin carboxylase (BC) catalyzes the carboxylation of biotin on its carrier protein (BCCP) and then the CO(2) group is transferred by the transcarboxylase to acetyl-CoA to form malonyl-CoA. In Bacillus pumilus (strain SAFR-032), this protein is Acetyl-coenzyme A carboxylase carboxyl transferase subunit beta.